Here is a 408-residue protein sequence, read N- to C-terminus: Peptidase T (408 aa).

Residue histidine 78 participates in Zn(2+) binding. Aspartate 80 is an active-site residue. Aspartate 141 contributes to the Zn(2+) binding site. Residue glutamate 175 is the Proton acceptor of the active site. 3 residues coordinate Zn(2+): glutamate 176, aspartate 198, and histidine 380.

This sequence belongs to the peptidase M20B family. It depends on Zn(2+) as a cofactor.

Its subcellular location is the cytoplasm. It catalyses the reaction Release of the N-terminal residue from a tripeptide.. Its function is as follows. Cleaves the N-terminal amino acid of tripeptides. The protein is Peptidase T of Clostridium botulinum (strain Okra / Type B1).